We begin with the raw amino-acid sequence, 325 residues long: MSLKSLLKGFKRPKKIEFNTEANTPNYGKFVAEPFERGFATTIGNSLRRTLMSSIEGAAISAIRIEGVNHEFSFIEGVAEDVTRIILNLKQVRIKYEPEEKDQSKIIHLELKGAGYFRAGDLAVDSSIEIMNPDLHIATLNEDANLVMDLEIQRGRGYVPAEEKKKDIEVLGTIPVDSIFSPVQKVVFEVSETRVAQRSDYEKLTLEVWTDGSVSPDDAVAQAAKILKEHLTVFINFEEELEEEDDELDEADEKLKASLSKHVEELELSVRSLNVLRSLEIDFIGDLVKRSEEEMSKSKHYSDQCLQELKVKLSTLGLSFGMRDF.

The tract at residues 1 to 238 (MSLKSLLKGF…EHLTVFINFE (238 aa)) is alpha N-terminal domain (alpha-NTD). The tract at residues 255–325 (LKASLSKHVE…LGLSFGMRDF (71 aa)) is alpha C-terminal domain (alpha-CTD).

Belongs to the RNA polymerase alpha chain family. Homodimer. The RNAP catalytic core consists of 2 alpha, 1 beta, 1 beta' and 1 omega subunit. When a sigma factor is associated with the core the holoenzyme is formed, which can initiate transcription.

It catalyses the reaction RNA(n) + a ribonucleoside 5'-triphosphate = RNA(n+1) + diphosphate. DNA-dependent RNA polymerase catalyzes the transcription of DNA into RNA using the four ribonucleoside triphosphates as substrates. This is DNA-directed RNA polymerase subunit alpha from Leptospira interrogans serogroup Icterohaemorrhagiae serovar copenhageni (strain Fiocruz L1-130).